A 312-amino-acid polypeptide reads, in one-letter code: Formimidoylglutamase (312 aa).

Mn(2+) contacts are provided by His123, Asp152, His154, Asp156, Cys243, and Asp245.

It belongs to the arginase family. It depends on Mn(2+) as a cofactor.

It carries out the reaction N-formimidoyl-L-glutamate + H2O = formamide + L-glutamate. It participates in amino-acid degradation; L-histidine degradation into L-glutamate; L-glutamate from N-formimidoyl-L-glutamate (hydrolase route): step 1/1. Functionally, catalyzes the conversion of N-formimidoyl-L-glutamate to L-glutamate and formamide. This chain is Formimidoylglutamase, found in Pseudomonas fluorescens (strain ATCC BAA-477 / NRRL B-23932 / Pf-5).